We begin with the raw amino-acid sequence, 173 residues long: Putative phosphoesterase GWCH70_0799 (173 aa).

His34 acts as the Proton donor in catalysis. 2 short sequence motifs (HXTX) span residues 34–37 (HLTL) and 115–118 (HITI). His115 serves as the catalytic Proton acceptor.

This sequence belongs to the 2H phosphoesterase superfamily. YjcG family.

This chain is Putative phosphoesterase GWCH70_0799, found in Geobacillus sp. (strain WCH70).